Here is a 324-residue protein sequence, read N- to C-terminus: MEDLALRPKTLDEYIGQERLKQKLRVYLEAAKARKEPLEHLLLFGPPGLGKTTLAHVIAHELGVNLRVTSGPAIEKPGDLAAILANSLEEGDILFIDEIHRLSRQAEEHLYPAMEDFVMDIVIGQGPAARTIRLELPRFALIGATTRPGLITAPLLSRFGIVEHLEYYTPEELAQGVMRDARLLGVRITEEAALEIGRRSRGTMRVAKRLFRRVRDFAQVEGEEVITRERALEALAALGLDELGLEKRDREILEVLILRFGAGPVGLATLATALSEDPGTLEEVHEPYLIRQGLLKRTPRGRVATELAYRHLGYPPPVGPLLEP.

Positions 1 to 168 (MEDLALRPKT…FGIVEHLEYY (168 aa)) are large ATPase domain (RuvB-L). Residues Leu-6, Arg-7, Gly-48, Lys-51, Thr-52, Thr-53, 115–117 (EDF), Arg-158, Tyr-168, and Arg-205 each bind ATP. Thr-52 is a Mg(2+) binding site. Residues 169-239 (TPEELAQGVM…RALEALAALG (71 aa)) are small ATPAse domain (RuvB-S). A head domain (RuvB-H) region spans residues 242–324 (ELGLEKRDRE…PPPVGPLLEP (83 aa)). 2 residues coordinate DNA: Arg-297 and Arg-302.

The protein belongs to the RuvB family. As to quaternary structure, homohexamer. Forms an RuvA(8)-RuvB(12)-Holliday junction (HJ) complex. HJ DNA is sandwiched between 2 RuvA tetramers; dsDNA enters through RuvA and exits via RuvB. An RuvB hexamer assembles on each DNA strand where it exits the tetramer. Each RuvB hexamer is contacted by two RuvA subunits (via domain III) on 2 adjacent RuvB subunits; this complex drives branch migration. In the full resolvosome a probable DNA-RuvA(4)-RuvB(12)-RuvC(2) complex forms which resolves the HJ.

The protein localises to the cytoplasm. It carries out the reaction ATP + H2O = ADP + phosphate + H(+). With respect to regulation, the ATPase activity of RuvB is enhanced by RuvA. In terms of biological role, the RuvA-RuvB-RuvC complex processes Holliday junction (HJ) DNA during genetic recombination and DNA repair, while the RuvA-RuvB complex plays an important role in the rescue of blocked DNA replication forks via replication fork reversal (RFR). RuvA specifically binds to HJ cruciform DNA, conferring on it an open structure. The RuvB hexamer acts as an ATP-dependent pump, pulling dsDNA into and through the RuvAB complex. RuvB forms 2 homohexamers on either side of HJ DNA bound by 1 or 2 RuvA tetramers; 4 subunits per hexamer contact DNA at a time. Coordinated motions by a converter formed by DNA-disengaged RuvB subunits stimulates ATP hydrolysis and nucleotide exchange. Immobilization of the converter enables RuvB to convert the ATP-contained energy into a lever motion, pulling 2 nucleotides of DNA out of the RuvA tetramer per ATP hydrolyzed, thus driving DNA branch migration. The RuvB motors rotate together with the DNA substrate, which together with the progressing nucleotide cycle form the mechanistic basis for DNA recombination by continuous HJ branch migration. Branch migration allows RuvC to scan DNA until it finds its consensus sequence, where it cleaves and resolves cruciform DNA. Its function is as follows. Has Mg(2+)-, DNA-dependent ATPase activity; dsDNA and supercoiled DNA but not ssDNA stimulate activity. Binds to linear dsDNA in the absence of ATP or ATP-gamma-S. This subunit can promote Holliday junction migration alone in vitro. Partially complements an E.coli deletion for UV sensitivity. The chain is Holliday junction branch migration complex subunit RuvB from Thermus thermophilus.